Consider the following 186-residue polypeptide: Ribosome-recycling factor (186 aa).

It belongs to the RRF family.

It is found in the cytoplasm. Responsible for the release of ribosomes from messenger RNA at the termination of protein biosynthesis. May increase the efficiency of translation by recycling ribosomes from one round of translation to another. The chain is Ribosome-recycling factor from Rickettsia africae (strain ESF-5).